The following is a 126-amino-acid chain: Fluoride-specific ion channel FluC (126 aa).

4 helical membrane passes run L2–L22, W37–I57, A65–F85, and A101–V121. 2 residues coordinate Na(+): G77 and T80.

This sequence belongs to the fluoride channel Fluc/FEX (TC 1.A.43) family.

The protein resides in the cell inner membrane. The catalysed reaction is fluoride(in) = fluoride(out). Its activity is regulated as follows. Na(+) is not transported, but it plays an essential structural role and its presence is essential for fluoride channel function. Fluoride-specific ion channel. Important for reducing fluoride concentration in the cell, thus reducing its toxicity. This is Fluoride-specific ion channel FluC from Bordetella parapertussis (strain 12822 / ATCC BAA-587 / NCTC 13253).